The sequence spans 204 residues: Thymidine kinase (204 aa).

ATP is bound by residues 23 to 30 (GSMFSGKT) and 95 to 98 (DEAQ). The active-site Proton acceptor is glutamate 96. Residues cysteine 152, cysteine 155, cysteine 184, and cysteine 187 each coordinate Zn(2+).

Belongs to the thymidine kinase family. Homotetramer.

Its subcellular location is the cytoplasm. It carries out the reaction thymidine + ATP = dTMP + ADP + H(+). The protein is Thymidine kinase of Porphyromonas gingivalis (strain ATCC BAA-308 / W83).